The primary structure comprises 502 residues: MNLRPEEISSVIKEQIKNYSMQLEVSDVGTVIQVADGIARIHGLENAMQGELLEFPGDVYGMVLNLEEDNVGAVLLGDMKNINEGDTVKTTGRVVEVPVGDALLGRVVNALGQPIDGKGPIETKKYRQIERVASGVIARKSVDTPLQTGIKAIDSMVPIGRGQRELIIGDKQTGKTAIAIDTIINQKGQNVKCIYVAIGQKASTVANIVKTLEEYGALDYTTVVASTASELAPLQYIAPYSGCAIGEEWMESGQDVLVIYDDLTKHAAAYRTLSLLLKRPPGREAYPGDVFYLHSRLLERAARLNDELGGGSLTALPIIETQAGDVSAYIPTNVISITDGQIYLETDMFNAGFRPAVNAGLSVSRVGGSAQIKAMKKIAGPIRIELAQYRELAAFAQFGSDLDADTKEKLAQGERIREILKQPQYKPMPVEYQVIIIFAATKKYLLDIEVSKIRSFEKELFEFIDTKYPEIPASIRDKKVMDEECEKALITAIENFKKEFTN.

169–176 lines the ATP pocket; that stretch reads GDKQTGKT.

It belongs to the ATPase alpha/beta chains family. In terms of assembly, F-type ATPases have 2 components, CF(1) - the catalytic core - and CF(0) - the membrane proton channel. CF(1) has five subunits: alpha(3), beta(3), gamma(1), delta(1), epsilon(1). CF(0) has three main subunits: a(1), b(2) and c(9-12). The alpha and beta chains form an alternating ring which encloses part of the gamma chain. CF(1) is attached to CF(0) by a central stalk formed by the gamma and epsilon chains, while a peripheral stalk is formed by the delta and b chains.

The protein resides in the cell membrane. The enzyme catalyses ATP + H2O + 4 H(+)(in) = ADP + phosphate + 5 H(+)(out). Produces ATP from ADP in the presence of a proton gradient across the membrane. The alpha chain is a regulatory subunit. The sequence is that of ATP synthase subunit alpha from Lachnoclostridium phytofermentans (strain ATCC 700394 / DSM 18823 / ISDg) (Clostridium phytofermentans).